We begin with the raw amino-acid sequence, 388 residues long: Interferon alpha/beta receptor 1b (388 aa).

Fibronectin type-III domains lie at 5–102 (LPQP…FCPD) and 109–211 (PPSR…TEGD). The helical transmembrane segment at 217-237 (IFLYFLVSMMVCFLLVLLSSY) threads the bilayer. A disordered region spans residues 308 to 357 (TAPPSELEQDSGRHIRQDSGDSGIYSTEGGSAQQGRSGGEPIRRDQEVDS). Positions 317 to 326 (DSGRHIRQDS) are enriched in basic and acidic residues. The span at 331–342 (IYSTEGGSAQQG) shows a compositional bias: polar residues.

This sequence belongs to the type II cytokine receptor family. As to quaternary structure, heterodimer with IFNAR2; forming the receptor for type I interferon.

It localises to the cell membrane. The protein resides in the cytoplasm. The protein localises to the perinuclear region. In terms of biological role, together with IFNAR2, forms the heterodimeric receptor for type I interferons (including interferons alpha, beta, epsilon, omega and kappa). Type I interferon binding activates the JAK-STAT signaling cascade, resulting in transcriptional activation or repression of interferon-regulated genes that encode the effectors of the interferon response. Mechanistically, type I interferon-binding brings the IFNAR1 and IFNAR2 subunits into close proximity with one another, driving their associated Janus kinases (JAKs) (TYK2 bound to IFNAR1 and JAK1 bound to IFNAR2) to cross-phosphorylate one another. The activated kinases phosphorylate specific tyrosine residues on the intracellular domains of IFNAR1 and IFNAR2, forming docking sites for the STAT transcription factors. STAT proteins are then phosphorylated by the JAKs, promoting their translocation into the nucleus to regulate expression of interferon-regulated genes. The polypeptide is Interferon alpha/beta receptor 1b (Oncorhynchus mykiss (Rainbow trout)).